The chain runs to 713 residues: Cytosolic endo-beta-N-acetylglucosaminidase (713 aa).

Residues 1–36 (MIARKRKSNGSETTSGKIPKDDVSSESCLDQPADES) form a disordered region. Residues 270 to 362 (FFDACDGFFT…DFRQNQDKFW (93 aa)) form the BRCT domain.

Belongs to the glycosyl hydrolase 85 family.

It localises to the cytoplasm. Its subcellular location is the cytosol. The catalysed reaction is an N(4)-(oligosaccharide-(1-&gt;3)-[oligosaccharide-(1-&gt;6)]-beta-D-Man-(1-&gt;4)-beta-D-GlcNAc-(1-&gt;4)-alpha-D-GlcNAc)-L-asparaginyl-[protein] + H2O = an oligosaccharide-(1-&gt;3)-[oligosaccharide-(1-&gt;6)]-beta-D-Man-(1-&gt;4)-D-GlcNAc + N(4)-(N-acetyl-beta-D-glucosaminyl)-L-asparaginyl-[protein]. In terms of biological role, endoglycosidase that releases N-glycans from glycoproteins by cleaving the beta-1,4-glycosidic bond in the N,N'-diacetylchitobiose core. Involved in the processing of free oligosaccharides in the cytosol. The sequence is that of Cytosolic endo-beta-N-acetylglucosaminidase (engase) from Danio rerio (Zebrafish).